Here is a 626-residue protein sequence, read N- to C-terminus: tRNA 5-methylaminomethyl-2-thiouridine biosynthesis bifunctional protein MnmC (626 aa).

Residues methionine 1 to glutamine 237 form a tRNA (mnm(5)s(2)U34)-methyltransferase region. The interval isoleucine 255–glutamate 626 is FAD-dependent cmnm(5)s(2)U34 oxidoreductase.

In the N-terminal section; belongs to the methyltransferase superfamily. tRNA (mnm(5)s(2)U34)-methyltransferase family. It in the C-terminal section; belongs to the DAO family. Requires FAD as cofactor.

The protein resides in the cytoplasm. The catalysed reaction is 5-aminomethyl-2-thiouridine(34) in tRNA + S-adenosyl-L-methionine = 5-methylaminomethyl-2-thiouridine(34) in tRNA + S-adenosyl-L-homocysteine + H(+). Catalyzes the last two steps in the biosynthesis of 5-methylaminomethyl-2-thiouridine (mnm(5)s(2)U) at the wobble position (U34) in tRNA. Catalyzes the FAD-dependent demodification of cmnm(5)s(2)U34 to nm(5)s(2)U34, followed by the transfer of a methyl group from S-adenosyl-L-methionine to nm(5)s(2)U34, to form mnm(5)s(2)U34. The protein is tRNA 5-methylaminomethyl-2-thiouridine biosynthesis bifunctional protein MnmC of Hahella chejuensis (strain KCTC 2396).